Consider the following 140-residue polypeptide: Putative pre-16S rRNA nuclease (140 aa).

This sequence belongs to the YqgF nuclease family.

It is found in the cytoplasm. Functionally, could be a nuclease involved in processing of the 5'-end of pre-16S rRNA. This is Putative pre-16S rRNA nuclease from Mycoplasma pneumoniae (strain ATCC 29342 / M129 / Subtype 1) (Mycoplasmoides pneumoniae).